The chain runs to 778 residues: Endonuclease MutS2 (778 aa).

Residue 328–335 (GPNTGGKT) participates in ATP binding. The Smr domain occupies 702–777 (LDLRGKRYEE…GSGATIVTFK (76 aa)).

It belongs to the DNA mismatch repair MutS family. MutS2 subfamily. Homodimer. Binds to stalled ribosomes, contacting rRNA.

In terms of biological role, endonuclease that is involved in the suppression of homologous recombination and thus may have a key role in the control of bacterial genetic diversity. Its function is as follows. Acts as a ribosome collision sensor, splitting the ribosome into its 2 subunits. Detects stalled/collided 70S ribosomes which it binds and splits by an ATP-hydrolysis driven conformational change. Acts upstream of the ribosome quality control system (RQC), a ribosome-associated complex that mediates the extraction of incompletely synthesized nascent chains from stalled ribosomes and their subsequent degradation. Probably generates substrates for RQC. This is Endonuclease MutS2 from Streptococcus pneumoniae (strain P1031).